Reading from the N-terminus, the 560-residue chain is Phosphoglucomutase 1 (560 aa).

Alpha-D-glucose 1,6-bisphosphate is bound by residues arginine 24 and serine 116. Serine 116 (phosphoserine intermediate) is an active-site residue. Residues serine 116, aspartate 288, aspartate 290, and aspartate 292 each coordinate Mg(2+). Serine 116 carries the phosphoserine modification. Residues aspartate 292, arginine 293, threonine 357, glutamate 376, serine 378, and lysine 389 each contribute to the alpha-D-glucose 1,6-bisphosphate site.

The protein belongs to the phosphohexose mutase family. Monomer. It depends on Mg(2+) as a cofactor. As to expression, localized primarily to fat bodies in third instar larvae.

It catalyses the reaction alpha-D-glucose 1-phosphate = alpha-D-glucose 6-phosphate. The enzyme catalyses O-phospho-L-seryl-[protein] + alpha-D-glucose 1-phosphate = alpha-D-glucose 1,6-bisphosphate + L-seryl-[protein]. The catalysed reaction is alpha-D-glucose 1,6-bisphosphate + L-seryl-[protein] = O-phospho-L-seryl-[protein] + alpha-D-glucose 6-phosphate. Functionally, catalyzes the reversible isomerization of alpha-D-glucose 1-phosphate to alpha-D-glucose 6-phosphate. The mechanism proceeds via the intermediate compound alpha-D-glucose 1,6-bisphosphate. This enzyme participates in both the breakdown and synthesis of glucose. Enzyme of the glycolytic pathway. Glycolysis is essential in glial cells but not in neurons; neurons rely on the citric acid cycle for their energy needs, and on lactate and alanine secreted into the hemolymph by glial cells to fuel it. The chain is Phosphoglucomutase 1 from Drosophila melanogaster (Fruit fly).